The sequence spans 123 residues: Small ribosomal subunit protein uS12c (123 aa).

The segment covering 1 to 16 has biased composition (polar residues); sequence MPTIQQLIRNSRQPAE. The tract at residues 1–23 is disordered; that stretch reads MPTIQQLIRNSRQPAENRTKSPA.

Belongs to the universal ribosomal protein uS12 family. Part of the 30S ribosomal subunit.

It is found in the plastid. The protein resides in the chloroplast. In terms of biological role, with S4 and S5 plays an important role in translational accuracy. Located at the interface of the 30S and 50S subunits. The sequence is that of Small ribosomal subunit protein uS12c (rps12) from Staurastrum punctulatum (Green alga).